Here is a 1412-residue protein sequence, read N- to C-terminus: uncharacterized protein (1412 aa).

Residues 1–22 (MESINVVNSVEDLPGFNPDENV) form a disordered region. Coiled coils occupy residues 317–377 (NNDF…ILRH) and 732–800 (SKEA…SDDE). Residues 778 to 808 (SRKRKHEDIVKEHEAEKRDSDDEDDFEEVDV) are disordered. Residues 783–797 (HEDIVKEHEAEKRDS) are compositionally biased toward basic and acidic residues. The span at 798-808 (DDEDDFEEVDV) shows a compositional bias: acidic residues.

This is an uncharacterized protein from Magallana gigas (Pacific oyster).